A 315-amino-acid chain; its full sequence is Ribosomal RNA small subunit methyltransferase H (315 aa).

S-adenosyl-L-methionine contacts are provided by residues 35 to 37 (AGH), aspartate 55, phenylalanine 84, aspartate 105, and glutamine 112.

This sequence belongs to the methyltransferase superfamily. RsmH family.

It localises to the cytoplasm. It carries out the reaction cytidine(1402) in 16S rRNA + S-adenosyl-L-methionine = N(4)-methylcytidine(1402) in 16S rRNA + S-adenosyl-L-homocysteine + H(+). Its function is as follows. Specifically methylates the N4 position of cytidine in position 1402 (C1402) of 16S rRNA. This chain is Ribosomal RNA small subunit methyltransferase H, found in Streptococcus agalactiae serotype Ia (strain ATCC 27591 / A909 / CDC SS700).